Here is a 354-residue protein sequence, read N- to C-terminus: Probable serine acetyltransferase 2 (354 aa).

Belongs to the transferase hexapeptide repeat family. In terms of assembly, homomultimer.

The catalysed reaction is L-serine + acetyl-CoA = O-acetyl-L-serine + CoA. The protein operates within amino-acid biosynthesis; L-cysteine biosynthesis; L-cysteine from L-serine: step 1/2. The protein is Probable serine acetyltransferase 2 (SAT2) of Oryza sativa subsp. japonica (Rice).